The primary structure comprises 307 residues: Probable aspartoacylase (307 aa).

Zn(2+)-binding residues include H13 and E16. Residues R55 and 62–63 (NR) contribute to the substrate site. H105 is a Zn(2+) binding site. Substrate-binding residues include E163 and Y276.

It belongs to the AspA/AstE family. Aspartoacylase subfamily. The cofactor is Zn(2+).

The enzyme catalyses an N-acyl-L-aspartate + H2O = a carboxylate + L-aspartate. The chain is Probable aspartoacylase from Prochlorococcus marinus (strain SARG / CCMP1375 / SS120).